Consider the following 766-residue polypeptide: 5-methyltetrahydropteroyltriglutamate--homocysteine methyltransferase 1 (766 aa).

Positions 18 and 116 each coordinate 5-methyltetrahydropteroyltri-L-glutamate. Residues 438–440 (IGS) and Glu-491 contribute to the L-homocysteine site. L-methionine contacts are provided by residues 438 to 440 (IGS) and Glu-491. 5-methyltetrahydropteroyltri-L-glutamate contacts are provided by residues Asp-496, Tyr-519, 522 to 523 (RC), and Trp-568. Asp-606 contacts L-homocysteine. Asp-606 serves as a coordination point for L-methionine. Residues His-648, Cys-650, His-659, and Glu-672 each coordinate Zn(2+). Residue His-702 is the Proton donor of the active site. Residue Cys-734 participates in Zn(2+) binding.

This sequence belongs to the vitamin-B12 independent methionine synthase family. Zn(2+) serves as cofactor.

It is found in the cytoplasm. The protein localises to the cytosol. It catalyses the reaction 5-methyltetrahydropteroyltri-L-glutamate + L-homocysteine = tetrahydropteroyltri-L-glutamate + L-methionine. The protein operates within amino-acid biosynthesis; L-methionine biosynthesis via de novo pathway; L-methionine from L-homocysteine (MetE route): step 1/1. Its function is as follows. Catalyzes the transfer of a methyl group from 5-methyltetrahydrofolate to homocysteine resulting in methionine formation. This is 5-methyltetrahydropteroyltriglutamate--homocysteine methyltransferase 1 from Oryza sativa subsp. japonica (Rice).